Reading from the N-terminus, the 67-residue chain is Large ribosomal subunit protein bL31 (67 aa).

Zn(2+) contacts are provided by Cys16, Cys18, Cys36, and Cys39.

Belongs to the bacterial ribosomal protein bL31 family. Type A subfamily. In terms of assembly, part of the 50S ribosomal subunit. It depends on Zn(2+) as a cofactor.

Its function is as follows. Binds the 23S rRNA. This is Large ribosomal subunit protein bL31 from Treponema denticola (strain ATCC 35405 / DSM 14222 / CIP 103919 / JCM 8153 / KCTC 15104).